Reading from the N-terminus, the 62-residue chain is MSEIAKWLNTRFQLTLIPKENSNTEFVGPCIFREDGDNTKLFGFRTTLFYTYIGMQTCLLSE.

It localises to the mitochondrion. This is an uncharacterized protein from Marchantia polymorpha (Common liverwort).